The chain runs to 141 residues: ATP synthase epsilon chain (141 aa).

It belongs to the ATPase epsilon chain family. In terms of assembly, F-type ATPases have 2 components, CF(1) - the catalytic core - and CF(0) - the membrane proton channel. CF(1) has five subunits: alpha(3), beta(3), gamma(1), delta(1), epsilon(1). CF(0) has three main subunits: a, b and c.

It localises to the cell membrane. In terms of biological role, produces ATP from ADP in the presence of a proton gradient across the membrane. This Lactococcus lactis subsp. lactis (strain IL1403) (Streptococcus lactis) protein is ATP synthase epsilon chain.